The chain runs to 204 residues: UPF0228 protein MA_0511 (204 aa).

It belongs to the UPF0228 family.

The protein is UPF0228 protein MA_0511 of Methanosarcina acetivorans (strain ATCC 35395 / DSM 2834 / JCM 12185 / C2A).